A 338-amino-acid chain; its full sequence is MENLDALVSQALEAVQSAEDINALEQIRVHYLGKKGELTQVMKTLGNLPAEERPQVGALINVAKERVTEVLNARKASFEQAELTARLAAECIDVTLPGRGQTSGGLHPITRTLERIEQFFTHIGYGIAEGPEVEDDYHNFEALNIPGHHPARSMHDTFYFNANMLLRTHTSPVQVRTMESQQPPIRIVCPGRVYRSDSDITHSPMFHQIEGLLVDRDINFADLKGTIEEFLRVFFEKELAVRFRPSYFPFTEPSAEVDMECVMCSGKGCRVCKQTGWLEVMGCGMVHPNVLRMSGIDPEEFQGFAFGMGVERLAMLRYGVNDLRLFFDNDLRFLAQFR.

Glu-252 provides a ligand contact to Mg(2+).

It belongs to the class-II aminoacyl-tRNA synthetase family. Phe-tRNA synthetase alpha subunit type 1 subfamily. In terms of assembly, tetramer of two alpha and two beta subunits. The cofactor is Mg(2+).

The protein localises to the cytoplasm. The enzyme catalyses tRNA(Phe) + L-phenylalanine + ATP = L-phenylalanyl-tRNA(Phe) + AMP + diphosphate + H(+). The polypeptide is Phenylalanine--tRNA ligase alpha subunit (Pseudomonas syringae pv. syringae (strain B728a)).